The primary structure comprises 325 residues: NADH-quinone oxidoreductase subunit H (325 aa).

The next 8 membrane-spanning stretches (helical) occupy residues 11–31 (ILLSILKAVVILLVVVTCGAF), 81–101 (VIFTLAPVIAFTSLLLAFAIV), 114–134 (IGILFFLMMAGLAVYAVLFAG), 154–174 (LSYEVFLGLSLMGVVAQAGSF), 186–206 (LWNVIPQFFGFVTFAIAGVAV), 237–257 (FFVGEYIGIVTVSALIVTLFF), 265–285 (LPPFIWFALKTAFFMMMFILI), and 304–324 (VCLPLTLVNLLVTAAVILWQA).

The protein belongs to the complex I subunit 1 family. As to quaternary structure, NDH-1 is composed of 13 different subunits. Subunits NuoA, H, J, K, L, M, N constitute the membrane sector of the complex.

It localises to the cell inner membrane. It carries out the reaction a quinone + NADH + 5 H(+)(in) = a quinol + NAD(+) + 4 H(+)(out). In terms of biological role, NDH-1 shuttles electrons from NADH, via FMN and iron-sulfur (Fe-S) centers, to quinones in the respiratory chain. The immediate electron acceptor for the enzyme in this species is believed to be ubiquinone. Couples the redox reaction to proton translocation (for every two electrons transferred, four hydrogen ions are translocated across the cytoplasmic membrane), and thus conserves the redox energy in a proton gradient. This subunit may bind ubiquinone. The polypeptide is NADH-quinone oxidoreductase subunit H (Klebsiella pneumoniae (strain 342)).